Here is a 258-residue protein sequence, read N- to C-terminus: Flagellar L-ring protein (258 aa).

A signal peptide spans 1-15 (MKRIVCLALFLSMTG). The N-palmitoyl cysteine moiety is linked to residue Cys16. Residue Cys16 is the site of S-diacylglycerol cysteine attachment.

Belongs to the FlgH family. In terms of assembly, the basal body constitutes a major portion of the flagellar organelle and consists of four rings (L,P,S, and M) mounted on a central rod.

It localises to the cell outer membrane. The protein resides in the bacterial flagellum basal body. In terms of biological role, assembles around the rod to form the L-ring and probably protects the motor/basal body from shearing forces during rotation. This is Flagellar L-ring protein from Vibrio atlanticus (strain LGP32) (Vibrio splendidus (strain Mel32)).